A 304-amino-acid chain; its full sequence is tRNA dimethylallyltransferase (304 aa).

9-16 (APTAAGKS) provides a ligand contact to ATP. 11–16 (TAAGKS) serves as a coordination point for substrate.

It belongs to the IPP transferase family. As to quaternary structure, monomer. Mg(2+) serves as cofactor.

It catalyses the reaction adenosine(37) in tRNA + dimethylallyl diphosphate = N(6)-dimethylallyladenosine(37) in tRNA + diphosphate. Its function is as follows. Catalyzes the transfer of a dimethylallyl group onto the adenine at position 37 in tRNAs that read codons beginning with uridine, leading to the formation of N6-(dimethylallyl)adenosine (i(6)A). The chain is tRNA dimethylallyltransferase from Deinococcus geothermalis (strain DSM 11300 / CIP 105573 / AG-3a).